The primary structure comprises 289 residues: Bifunctional protein FolD (289 aa).

NADP(+)-binding positions include 166 to 168 (GRS), Ser-191, and Ile-232.

The protein belongs to the tetrahydrofolate dehydrogenase/cyclohydrolase family. Homodimer.

It catalyses the reaction (6R)-5,10-methylene-5,6,7,8-tetrahydrofolate + NADP(+) = (6R)-5,10-methenyltetrahydrofolate + NADPH. It carries out the reaction (6R)-5,10-methenyltetrahydrofolate + H2O = (6R)-10-formyltetrahydrofolate + H(+). Its pathway is one-carbon metabolism; tetrahydrofolate interconversion. Catalyzes the oxidation of 5,10-methylenetetrahydrofolate to 5,10-methenyltetrahydrofolate and then the hydrolysis of 5,10-methenyltetrahydrofolate to 10-formyltetrahydrofolate. The chain is Bifunctional protein FolD from Synechococcus elongatus (strain ATCC 33912 / PCC 7942 / FACHB-805) (Anacystis nidulans R2).